A 181-amino-acid polypeptide reads, in one-letter code: Ribulose bisphosphate carboxylase small subunit, chloroplastic 2 (181 aa).

The transit peptide at 1 to 54 (MASSMLSSAAVVTSPAQATMVAPFTGLKSSAAFPVTRKANNDITSIASNGGRVS) directs the protein to the chloroplast.

Belongs to the RuBisCO small chain family. As to quaternary structure, heterohexadecamer of 8 large and 8 small subunits.

Its subcellular location is the plastid. It is found in the chloroplast. In terms of biological role, ruBisCO catalyzes two reactions: the carboxylation of D-ribulose 1,5-bisphosphate, the primary event in carbon dioxide fixation, as well as the oxidative fragmentation of the pentose substrate. Both reactions occur simultaneously and in competition at the same active site. Although the small subunit is not catalytic it is essential for maximal activity. The sequence is that of Ribulose bisphosphate carboxylase small subunit, chloroplastic 2 from Brassica napus (Rape).